Consider the following 206-residue polypeptide: Small ribosomal subunit protein uS4 (206 aa).

A disordered region spans residues 27–47 (PSESKCNMNAAPGQHGGRRGR). The S4 RNA-binding domain occupies 96 to 158 (QRLDNVVYRM…SRKQIRIQSA (63 aa)).

Belongs to the universal ribosomal protein uS4 family. In terms of assembly, part of the 30S ribosomal subunit. Contacts protein S5. The interaction surface between S4 and S5 is involved in control of translational fidelity.

Its function is as follows. One of the primary rRNA binding proteins, it binds directly to 16S rRNA where it nucleates assembly of the body of the 30S subunit. Functionally, with S5 and S12 plays an important role in translational accuracy. This is Small ribosomal subunit protein uS4 from Dichelobacter nodosus (strain VCS1703A).